A 340-amino-acid polypeptide reads, in one-letter code: Heat-inducible transcription repressor HrcA (340 aa).

This sequence belongs to the HrcA family.

Functionally, negative regulator of class I heat shock genes (grpE-dnaK-dnaJ and groELS operons). Prevents heat-shock induction of these operons. In Burkholderia cenocepacia (strain HI2424), this protein is Heat-inducible transcription repressor HrcA.